Consider the following 69-residue polypeptide: Alternative ribosome-rescue factor A (69 aa).

It belongs to the alternative ribosome-rescue factor A family. In terms of assembly, interacts with the 70S ribosome and release factor 2.

Functionally, rescues ribosomes stalled at the 3' end of non-stop mRNAs. Recruits release factor 2 (RF2) to the stalled ribosome, helping position it correctly in the ribosomal A site so its GGQ motif can hydrolyze the peptidyl-tRNA bond. This is Alternative ribosome-rescue factor A (arfA) from Haemophilus influenzae (strain ATCC 51907 / DSM 11121 / KW20 / Rd).